A 245-amino-acid polypeptide reads, in one-letter code: 1-(5-phosphoribosyl)-5-[(5-phosphoribosylamino)methylideneamino] imidazole-4-carboxamide isomerase (245 aa).

The active-site Proton acceptor is aspartate 7. The active-site Proton donor is aspartate 129.

The protein belongs to the HisA/HisF family.

The protein localises to the cytoplasm. It carries out the reaction 1-(5-phospho-beta-D-ribosyl)-5-[(5-phospho-beta-D-ribosylamino)methylideneamino]imidazole-4-carboxamide = 5-[(5-phospho-1-deoxy-D-ribulos-1-ylimino)methylamino]-1-(5-phospho-beta-D-ribosyl)imidazole-4-carboxamide. It participates in amino-acid biosynthesis; L-histidine biosynthesis; L-histidine from 5-phospho-alpha-D-ribose 1-diphosphate: step 4/9. This chain is 1-(5-phosphoribosyl)-5-[(5-phosphoribosylamino)methylideneamino] imidazole-4-carboxamide isomerase, found in Tolumonas auensis (strain DSM 9187 / NBRC 110442 / TA 4).